A 149-amino-acid polypeptide reads, in one-letter code: Large ribosomal subunit protein bL9 (149 aa).

It belongs to the bacterial ribosomal protein bL9 family.

Its function is as follows. Binds to the 23S rRNA. The protein is Large ribosomal subunit protein bL9 of Aliivibrio salmonicida (strain LFI1238) (Vibrio salmonicida (strain LFI1238)).